A 224-amino-acid chain; its full sequence is Lipoprotein-releasing system ATP-binding protein LolD (224 aa).

The 220-residue stretch at 5–224 (LVLDGLTKAY…VVRLEAGRVV (220 aa)) folds into the ABC transporter domain. 42 to 49 (APSGAGKS) provides a ligand contact to ATP.

The protein belongs to the ABC transporter superfamily. Lipoprotein translocase (TC 3.A.1.125) family. In terms of assembly, the complex is composed of two ATP-binding proteins (LolD) and two transmembrane proteins (LolC and LolE).

Its subcellular location is the cell inner membrane. Part of the ABC transporter complex LolCDE involved in the translocation of mature outer membrane-directed lipoproteins, from the inner membrane to the periplasmic chaperone, LolA. Responsible for the formation of the LolA-lipoprotein complex in an ATP-dependent manner. The sequence is that of Lipoprotein-releasing system ATP-binding protein LolD from Cereibacter sphaeroides (strain ATCC 17023 / DSM 158 / JCM 6121 / CCUG 31486 / LMG 2827 / NBRC 12203 / NCIMB 8253 / ATH 2.4.1.) (Rhodobacter sphaeroides).